Here is a 149-residue protein sequence, read N- to C-terminus: Urease accessory protein UreE (149 aa).

The protein belongs to the UreE family.

The protein resides in the cytoplasm. In terms of biological role, involved in urease metallocenter assembly. Binds nickel. Probably functions as a nickel donor during metallocenter assembly. This chain is Urease accessory protein UreE, found in Prochlorococcus marinus (strain MIT 9215).